The chain runs to 582 residues: MSSSLGKEKDSKEKDPKVPSAKEREKEAKASGGFGKESKEKEPKTKGKDAKDGKKESSAAQPGVAFSVDNTIKRPNPALGTRKKSSNAEVTKELNKCREENSMRLDLSKRSIHILPPSVKELTQLTELYLYSNKLQSLPAEVGCLVNLMTLALSENSLTSLPDSLDNLKKLRMLDLRHNKLREIPSVVYRLDSLTTLYLRFNRITAVEKDVRNLPRLSTLSIRENKIKQLPAEIGELCNLITLDVAHNQLEHLPKEIGNCTQITNLDLQHNELLDLPDTIGNLSSLNRLGLRYNRLSAIPRSLAKCSALEELNLENNNISTLPESLLSSLVKLNSLTLARNCFQLYPVGGPSQFSTIYSLNMEHNRINKIPFGIFSRAKVLSKLNMKDNQLTSLPLDFGTWTSMVELNLATNQLTKIPEDVSGLVSLEVLILSNNLLKKLPHGLGNLRKLRELDLEENKLESLPNEIAYLKDLQKLVLTNNQLTTLPRGIGHLTNLTHLGLGENLLTHLPEEIGTLENLEELYLNDNPNLHSLPFELALCSKLSIMSIENCPLSHLPPQIVAGGPSFIIQFLKMQGPYRAMV.

Composition is skewed to basic and acidic residues over residues 1 to 29 (MSSSLGKEKDSKEKDPKVPSAKEREKEAK) and 36 to 57 (KESKEKEPKTKGKDAKDGKKES). The disordered stretch occupies residues 1-90 (MSSSLGKEKD…TRKKSSNAEV (90 aa)). The RVxF motif; important for interaction with PP1c signature appears at 63 to 66 (GVAF). 20 LRR repeats span residues 101–122 (NSMRLDLSKRSIHILPPSVKEL), 124–145 (QLTELYLYSNKLQSLPAEVGCL), 147–169 (NLMTLALSENSLTSLPDSLDNLK), 170–191 (KLRMLDLRHNKLREIPSVVYRL), 193–215 (SLTTLYLRFNRITAVEKDVRNLP), 216–237 (RLSTLSIRENKIKQLPAEIGEL), 239–260 (NLITLDVAHNQLEHLPKEIGNC), 262–283 (QITNLDLQHNELLDLPDTIGNL), 285–307 (SLNRLGLRYNRLSAIPRSLAKCS), 308–329 (ALEELNLENNNISTLPESLLSS), 332–353 (KLNSLTLARNCFQLYPVGGPSQ), 356–377 (TIYSLNMEHNRINKIPFGIFSR), 380–400 (VLSKLNMKDNQLTSLPLDFGT), 403–424 (SMVELNLATNQLTKIPEDVSGL), 426–448 (SLEVLILSNNLLKKLPHGLGNLR), 449–470 (KLRELDLEENKLESLPNEIAYL), 472–494 (DLQKLVLTNNQLTTLPRGIGHLT), 495–516 (NLTHLGLGENLLTHLPEEIGTL), 518–540 (NLEELYLNDNPNLHSLPFELALC), and 542–563 (KLSIMSIENCPLSHLPPQIVAG).

It belongs to the SHOC2 family. As to quaternary structure, component of the SHOC2-MRAS-PP1c (SMP) complex consisting of SHOC2, GTP-bound M-Ras/MRAS and the catalytic subunit of protein phosphatase 1 (either PPP1CA, PPP1CB or PPP1CC). SHOC2 and PP1c preferably bind M-Ras/MRAS, but they also bind K-Ras/KRAS, N-Ras/NRAS and H-Ras/HRAS; these interactions are GTP-dependent and both SHOC2 and PP1c are required to form a stable complex. Interacts with PP1c in the absence of Ras GTPases. Interacts with M-Ras/MRAS and RAF1. Interacts with ERBIN; disrupts the interaction with RAF1 and Ras, preventing the activation of the Ras signaling pathway. Interacts with LZTR1.

It localises to the cytoplasm. Its subcellular location is the nucleus. In terms of biological role, core component of the SHOC2-MRAS-PP1c (SMP) holophosphatase complex that regulates activation of the MAPK pathway. Acts as a scaffolding protein in the SMP complex. The SMP complex specifically dephosphorylates the inhibitory phosphorylation at 'Ser-259' of RAF1 kinase, 'Ser-365' of BRAF kinase and 'Ser-214' of ARAF kinase, stimulating their kinase activities. The SMP complex enhances the dephosphorylation activity and substrate specificity of PP1c. The chain is Leucine-rich repeat protein SHOC-2 (Shoc2) from Rattus norvegicus (Rat).